The primary structure comprises 240 residues: Keratinocyte-associated protein 3 (240 aa).

4 helical membrane passes run 21–41 (VGLA…VLHG), 63–83 (VISV…LLAS), 95–115 (LLTL…GLLL), and 163–183 (ALAL…LSGY).

Belongs to the TMEM54 family.

It localises to the membrane. This Mus musculus (Mouse) protein is Keratinocyte-associated protein 3 (Krtcap3).